Reading from the N-terminus, the 185-residue chain is Large ribosomal subunit protein uL5 (185 aa).

The protein belongs to the universal ribosomal protein uL5 family. In terms of assembly, part of the 50S ribosomal subunit; part of the 5S rRNA/L5/L18/L25 subcomplex. Contacts the 5S rRNA and the P site tRNA. Forms a bridge to the 30S subunit in the 70S ribosome.

This is one of the proteins that bind and probably mediate the attachment of the 5S RNA into the large ribosomal subunit, where it forms part of the central protuberance. In the 70S ribosome it contacts protein S13 of the 30S subunit (bridge B1b), connecting the 2 subunits; this bridge is implicated in subunit movement. Contacts the P site tRNA; the 5S rRNA and some of its associated proteins might help stabilize positioning of ribosome-bound tRNAs. The protein is Large ribosomal subunit protein uL5 of Parvibaculum lavamentivorans (strain DS-1 / DSM 13023 / NCIMB 13966).